Here is a 471-residue protein sequence, read N- to C-terminus: Siroheme synthase 1 (471 aa).

The segment at 1–203 (MEYLPLFAQL…GDTRAAEAVL (203 aa)) is precorrin-2 dehydrogenase /sirohydrochlorin ferrochelatase. NAD(+) contacts are provided by residues 22–23 (EV) and 43–44 (KK). Residue Ser-128 is modified to Phosphoserine. The tract at residues 215-471 (GEIILVGAGP…NLRSSVVNLA (257 aa)) is uroporphyrinogen-III C-methyltransferase. Pro-224 contacts S-adenosyl-L-methionine. Catalysis depends on Asp-247, which acts as the Proton acceptor. The active-site Proton donor is Lys-269. Residues 300–302 (GGD), Ile-305, 330–331 (TA), Met-382, and Gly-411 each bind S-adenosyl-L-methionine.

It in the N-terminal section; belongs to the precorrin-2 dehydrogenase / sirohydrochlorin ferrochelatase family. This sequence in the C-terminal section; belongs to the precorrin methyltransferase family.

The enzyme catalyses uroporphyrinogen III + 2 S-adenosyl-L-methionine = precorrin-2 + 2 S-adenosyl-L-homocysteine + H(+). It catalyses the reaction precorrin-2 + NAD(+) = sirohydrochlorin + NADH + 2 H(+). The catalysed reaction is siroheme + 2 H(+) = sirohydrochlorin + Fe(2+). It participates in cofactor biosynthesis; adenosylcobalamin biosynthesis; precorrin-2 from uroporphyrinogen III: step 1/1. It functions in the pathway cofactor biosynthesis; adenosylcobalamin biosynthesis; sirohydrochlorin from precorrin-2: step 1/1. The protein operates within porphyrin-containing compound metabolism; siroheme biosynthesis; precorrin-2 from uroporphyrinogen III: step 1/1. Its pathway is porphyrin-containing compound metabolism; siroheme biosynthesis; siroheme from sirohydrochlorin: step 1/1. It participates in porphyrin-containing compound metabolism; siroheme biosynthesis; sirohydrochlorin from precorrin-2: step 1/1. Multifunctional enzyme that catalyzes the SAM-dependent methylations of uroporphyrinogen III at position C-2 and C-7 to form precorrin-2 via precorrin-1. Then it catalyzes the NAD-dependent ring dehydrogenation of precorrin-2 to yield sirohydrochlorin. Finally, it catalyzes the ferrochelation of sirohydrochlorin to yield siroheme. The chain is Siroheme synthase 1 from Cronobacter sakazakii (strain ATCC BAA-894) (Enterobacter sakazakii).